Consider the following 145-residue polypeptide: Glutaconyl-CoA decarboxylase subunit gamma (145 aa).

Residues 52–82 are disordered; sequence APAPAAAPAAAPAPAAKPAAAAPAGSVTVSA. A compositionally biased stretch (low complexity) spans 57 to 75; that stretch reads AAPAAAPAPAAKPAAAAPA. Residues 77 to 145 form the Biotinyl-binding domain; sequence SVTVSAPMPG…VATGDVMVIL (69 aa). At Lys-112 the chain carries N6-biotinyllysine.

As to quaternary structure, heterooctamer consisting of two alpha, two beta, two gamma and two delta subunits. The cofactor is biotin.

It catalyses the reaction (2E)-glutaconyl-CoA + Na(+)(in) + H(+) = (2E)-butenoyl-CoA + Na(+)(out) + CO2. Its pathway is amino-acid degradation; L-glutamate degradation via hydroxyglutarate pathway; crotonoyl-CoA from L-glutamate: step 5/5. In terms of biological role, biotin carrier subunit of the primary sodium pump glutaconyl-CoA decarboxylase (GCD). The sequence is that of Glutaconyl-CoA decarboxylase subunit gamma (gcdC) from Acidaminococcus fermentans (strain ATCC 25085 / DSM 20731 / CCUG 9996 / CIP 106432 / VR4).